We begin with the raw amino-acid sequence, 208 residues long: Large ribosomal subunit protein uL4 (208 aa).

Residues 58 to 77 (RGGGRKPWRQKGTGRARQGS) form a disordered region. A compositionally biased stretch (basic residues) spans 60–71 (GGRKPWRQKGTG).

The protein belongs to the universal ribosomal protein uL4 family. In terms of assembly, part of the 50S ribosomal subunit.

Functionally, one of the primary rRNA binding proteins, this protein initially binds near the 5'-end of the 23S rRNA. It is important during the early stages of 50S assembly. It makes multiple contacts with different domains of the 23S rRNA in the assembled 50S subunit and ribosome. Its function is as follows. Forms part of the polypeptide exit tunnel. This is Large ribosomal subunit protein uL4 from Caldicellulosiruptor bescii (strain ATCC BAA-1888 / DSM 6725 / KCTC 15123 / Z-1320) (Anaerocellum thermophilum).